Reading from the N-terminus, the 539-residue chain is Glucans biosynthesis protein D (539 aa).

Residues 1 to 29 (MNRRNLLKASMALAAYGSVSASGLFAARA) constitute a signal peptide (tat-type signal).

The protein belongs to the OpgD/OpgG family. Post-translationally, predicted to be exported by the Tat system. The position of the signal peptide cleavage has not been experimentally proven.

The protein localises to the periplasm. It participates in glycan metabolism; osmoregulated periplasmic glucan (OPG) biosynthesis. Probably involved in the control of the structural glucose backbone of osmoregulated periplasmic glucans (OPGs). This is Glucans biosynthesis protein D from Pseudomonas syringae pv. syringae (strain B728a).